We begin with the raw amino-acid sequence, 275 residues long: Phosphonoacetaldehyde hydrolase (275 aa).

Catalysis depends on aspartate 15, which acts as the Nucleophile. The Mg(2+) site is built by aspartate 15 and alanine 17. Residue lysine 56 is the Schiff-base intermediate with substrate of the active site. Position 189 (aspartate 189) interacts with Mg(2+).

Belongs to the HAD-like hydrolase superfamily. PhnX family. Homodimer. Mg(2+) serves as cofactor.

The enzyme catalyses phosphonoacetaldehyde + H2O = acetaldehyde + phosphate + H(+). Its function is as follows. Involved in phosphonate degradation. The chain is Phosphonoacetaldehyde hydrolase from Pseudomonas putida (strain ATCC 700007 / DSM 6899 / JCM 31910 / BCRC 17059 / LMG 24140 / F1).